The sequence spans 889 residues: Cytoplasmic aconitate hydratase (889 aa).

Substrate contacts are provided by residues Gln86 and 205 to 207 (DSH). Cys437, Cys503, and Cys506 together coordinate [4Fe-4S] cluster. Residues Arg536, Arg541, Arg699, and 779–780 (SR) contribute to the substrate site.

The protein belongs to the aconitase/IPM isomerase family. In terms of assembly, interacts (when associated with the 4Fe-4S) with FBXL5. Interacts with frataxin(81-210). [4Fe-4S] cluster serves as cofactor.

It localises to the cytoplasm. It is found in the cytosol. It carries out the reaction citrate = D-threo-isocitrate. Functionally, bifunctional iron sensor that switches between 2 activities depending on iron availability. Iron deprivation, promotes its mRNA binding activity through which it regulates the expression of genes involved in iron uptake, sequestration and utilization. Binds to iron-responsive elements (IRES) in the untranslated region of target mRNAs preventing for instance the translation of ferritin and aminolevulinic acid synthase and stabilizing the transferrin receptor mRNA. Its function is as follows. Conversely, when cellular iron levels are high, binds a 4Fe-4S cluster which precludes RNA binding activity and promotes the aconitase activity, the isomerization of citrate to isocitrate via cis-aconitate. This is Cytoplasmic aconitate hydratase (ACO1) from Oryctolagus cuniculus (Rabbit).